Here is a 316-residue protein sequence, read N- to C-terminus: Glutathione synthetase (316 aa).

Residues K125–E310 form the ATP-grasp domain. W151–G207 provides a ligand contact to ATP. Residues E281 and N283 each contribute to the Mg(2+) site.

This sequence belongs to the prokaryotic GSH synthase family. As to quaternary structure, homotetramer. Mg(2+) is required as a cofactor. Requires Mn(2+) as cofactor.

The catalysed reaction is gamma-L-glutamyl-L-cysteine + glycine + ATP = glutathione + ADP + phosphate + H(+). It participates in sulfur metabolism; glutathione biosynthesis; glutathione from L-cysteine and L-glutamate: step 2/2. With respect to regulation, inhibited by 7,8-dihydrofolate, methotrexate and trimethoprim. The protein is Glutathione synthetase (gshB) of Escherichia coli (strain K12).